A 184-amino-acid chain; its full sequence is ATP-dependent protease subunit HslV (184 aa).

T12 is an active-site residue. Na(+)-binding residues include G167, C170, and T173.

This sequence belongs to the peptidase T1B family. HslV subfamily. As to quaternary structure, a double ring-shaped homohexamer of HslV is capped on each side by a ring-shaped HslU homohexamer. The assembly of the HslU/HslV complex is dependent on binding of ATP.

Its subcellular location is the cytoplasm. It catalyses the reaction ATP-dependent cleavage of peptide bonds with broad specificity.. With respect to regulation, allosterically activated by HslU binding. Functionally, protease subunit of a proteasome-like degradation complex believed to be a general protein degrading machinery. The sequence is that of ATP-dependent protease subunit HslV from Wolbachia sp. subsp. Drosophila simulans (strain wRi).